Here is a 335-residue protein sequence, read N- to C-terminus: Transaldolase (335 aa).

Lysine 135 functions as the Schiff-base intermediate with substrate in the catalytic mechanism.

This sequence belongs to the transaldolase family. Type 1 subfamily. As to quaternary structure, homodimer.

The protein localises to the cytoplasm. The catalysed reaction is D-sedoheptulose 7-phosphate + D-glyceraldehyde 3-phosphate = D-erythrose 4-phosphate + beta-D-fructose 6-phosphate. The protein operates within carbohydrate degradation; pentose phosphate pathway; D-glyceraldehyde 3-phosphate and beta-D-fructose 6-phosphate from D-ribose 5-phosphate and D-xylulose 5-phosphate (non-oxidative stage): step 2/3. Transaldolase is important for the balance of metabolites in the pentose-phosphate pathway. In Prochlorococcus marinus (strain SARG / CCMP1375 / SS120), this protein is Transaldolase.